Reading from the N-terminus, the 427-residue chain is Adenylosuccinate synthetase (427 aa).

Residues 12 to 18 and 40 to 42 contribute to the GTP site; these read GDEGKGK and GHT. Catalysis depends on Asp13, which acts as the Proton acceptor. Positions 13 and 40 each coordinate Mg(2+). IMP-binding positions include 13 to 16, 38 to 41, Thr128, Arg142, Gln223, Thr238, and Arg302; these read DEGK and NAGH. His41 acts as the Proton donor in catalysis. 298-304 lines the substrate pocket; that stretch reads TTTGRPR. GTP-binding positions include Arg304, 330-332, and 412-414; these read SID and SVG.

Belongs to the adenylosuccinate synthetase family. Homodimer. Mg(2+) is required as a cofactor.

It localises to the cytoplasm. It catalyses the reaction IMP + L-aspartate + GTP = N(6)-(1,2-dicarboxyethyl)-AMP + GDP + phosphate + 2 H(+). It functions in the pathway purine metabolism; AMP biosynthesis via de novo pathway; AMP from IMP: step 1/2. Plays an important role in the de novo pathway of purine nucleotide biosynthesis. Catalyzes the first committed step in the biosynthesis of AMP from IMP. This Staphylococcus aureus (strain MW2) protein is Adenylosuccinate synthetase.